The sequence spans 387 residues: MATTKSFLILIVMILATTSSTFASLEEMVTVLSIDGGGVKGIIPGTILEFLEGQLQKMDNNADARLADYFDVIGGTSTGGLLTAMITTPNENNRPFAAANEIVPFYFEHGPHIFNSSTGQFFGPKYDGKYLMQVLQEKLGETRVHQALTEVAISSFDIKTNKPVIFTKSNLAKSPELDAKMYDICYSTAAAPTYFPPHYFATNTINGDKYEFNLVDGAVATVADPALLSVSVATRRAQEDPAFASIRSLNYKKMLLLSLGTGTTSEFDKTHTAEETAKWGALQWMLVIQQMTEAASSYMTDYYLSTVFQDLHSQNNYLRVQENALTGTTTKADDASEANMELLAQVGENLLKKPVSKDNPETYEEALKRFAKLLSDRKKLRANKASY.

The signal sequence occupies residues 1–23 (MATTKSFLILIVMILATTSSTFA). Residues 32-230 (LSIDGGGVKG…TVADPALLSV (199 aa)) form the PNPLA domain. Residues 36 to 41 (GGGVKG) carry the GXGXXG motif. The short motif at 75–79 (GTSTG) is the GXSXG element. The active-site Nucleophile is the S77. A glycan (N-linked (GlcNAc...) asparagine) is linked at N115. D216 (proton acceptor) is an active-site residue. The DGA/G signature appears at 216–218 (DGA). The stretch at 361–385 (ETYEEALKRFAKLLSDRKKLRANKA) forms a coiled coil.

Belongs to the patatin family. Tuber and stolon.

It localises to the vacuole. Its function is as follows. Probable lipolytic acyl hydrolase (LAH), an activity which is thought to be involved in the response of tubers to pathogens. The chain is Patatin group A-3 from Solanum tuberosum (Potato).